The primary structure comprises 75 residues: Insecticidal toxin OcyC10 (75 aa).

A signal peptide spans 1 to 19 (MNFATKIVILLLVAALILA). 2 disulfide bridges follow: Cys50–Cys62 and Cys56–Cys68.

As to expression, expressed by the venom gland.

Its subcellular location is the secreted. Its function is as follows. Insecticidal toxin. The protein is Insecticidal toxin OcyC10 of Opisthacanthus cayaporum (South American scorpion).